A 378-amino-acid polypeptide reads, in one-letter code: Coiled-coil domain-containing protein 74A (378 aa).

3 disordered regions span residues 1–52 (MSGA…RNLD), 128–211 (GGPS…EEPL), and 301–328 (EGSQRPQAAPEEASFPRDQEATHFPKVS). A compositionally biased stretch (polar residues) spans 34 to 44 (LRPQSPQLRQS). Residues 47–90 (QKRNLDLEKSLQFLQQQHSEMLAKLHEEIEHLKRENKDLHYKLI) are a coiled coil. The segment covering 141 to 151 (RTHRPGGKRGR) has biased composition (basic residues). Residues 165 to 182 (DSLSMSSFQSVKSISNSG) show a composition bias toward polar residues. Basic and acidic residues-rich tracts occupy residues 194 to 205 (QDSKADVSQKAD) and 314 to 323 (SFPRDQEATH).

The protein is Coiled-coil domain-containing protein 74A (CCDC74A) of Homo sapiens (Human).